The chain runs to 259 residues: MNIQQVIAITGAGSGIGLELVRSFKAAGYCVSALVRNEEQEAGLRSEFKDAIEIVAGDVCDHATNEKLVNKAVARFGHLDCFIGNAGIWDYMLGVDEPWEKLSGSFEEIFDINVKSYFSGISAALPELKKTNGSVVVTASVSSYAAGGGGSCYIASKHAVLGMVKALAYELAPHIRVNGVAPGGTVTSLAGPASAGFDKTKMKDMPGIDDMIKGLTPLGFAARPEDVVAPYLLLASREQGKFITGTVIGIDGGMALGRK.

NAD(+)-binding positions include Ala-8 to Val-35 and Asp-58. Substrate is bound at residue Ser-140. Tyr-153 (proton acceptor) is an active-site residue. Lys-157 is a binding site for NAD(+).

Belongs to the short-chain dehydrogenases/reductases (SDR) family.

The enzyme catalyses (1R,2S)-1,2-dihydronaphthalene-1,2-diol + NAD(+) = naphthalene-1,2-diol + NADH + H(+). It participates in aromatic compound metabolism; naphthalene degradation. Catalyzes the oxidation of naphthalene dihydrodiol into 1,2-dihydroxynaphthalene. This Ralstonia sp protein is 1,2-dihydroxy-1,2-dihydronaphthalene dehydrogenase.